Reading from the N-terminus, the 54-residue chain is Large ribosomal subunit protein bL33A (54 aa).

It belongs to the bacterial ribosomal protein bL33 family.

The polypeptide is Large ribosomal subunit protein bL33A (Mycolicibacterium gilvum (strain PYR-GCK) (Mycobacterium gilvum (strain PYR-GCK))).